The following is a 171-amino-acid chain: Apoptosis regulator Bcl-2 homolog (171 aa).

As to quaternary structure, interacts with host BECN1; this interaction inhibits host autophagy. Interacts with host BAK1 and BAX.

The protein localises to the host cytoplasm. Its function is as follows. Plays a role in the protection against apoptosis mediated by cytotoxic cells during the immune response to acute and persistent viral infection. Contributes therefore to latency establishment. Plays also a role in the inhibition of host starvation-induced autophagy which ultimately contributes to the viral chronic infection. The chain is Apoptosis regulator Bcl-2 homolog (vBCL2) from Murid herpesvirus 4 (MuHV-4).